A 362-amino-acid polypeptide reads, in one-letter code: Chemerin-like receptor 1 (362 aa).

The Extracellular portion of the chain corresponds to 1 to 37; that stretch reads MEAEDYNASYEDYPDDVDPIVVLEELSPLEGRVVRIL. N-linked (GlcNAc...) asparagine glycosylation is present at Asn-7. Residues 38–58 form a helical membrane-spanning segment; sequence LVAVYSVICLLGILGNGLVIV. Residues 59–70 lie on the Cytoplasmic side of the membrane; that stretch reads MITCKMKRTVNT. The chain crosses the membrane as a helical span at residues 71–91; the sequence is VWFLNLAVADFLFNVFLPVHI. At 92 to 108 the chain is on the extracellular side; sequence AYAALDYHWVFGTAMCK. A disulfide bridge links Cys-107 with Cys-184. Residues 109 to 129 form a helical membrane-spanning segment; the sequence is ISNFLLIHNMFTSVFLLTVIS. The Cytoplasmic segment spans residues 130 to 151; it reads FDRCVSVLLPVWSQNHRSVRLA. A helical membrane pass occupies residues 152-172; sequence YTACLVIWVLAFFLSSPSLVF. The Extracellular segment spans residues 173–219; that stretch reads RDTARLHGKISCFNNFSLSAAVSSPWPAHPQVDPVGSGRHKVVTITR. Asn-187 carries an N-linked (GlcNAc...) asparagine glycan. A helical membrane pass occupies residues 220-240; that stretch reads FLCGFLVPGLITTACYLTIVY. The Cytoplasmic segment spans residues 241 to 255; sequence KLQRSRLAKTKKPFK. A helical transmembrane segment spans residues 256 to 276; it reads IILTIIVTFFLCWCPYHAFYL. Residues 277–281 lie on the Extracellular side of the membrane; sequence LELRR. The chain crosses the membrane as a helical span at residues 282–302; the sequence is GSVPPSVFSLGVPLATAIAIA. The Cytoplasmic segment spans residues 303 to 362; the sequence is NSCMNPILYVFMGQDFKKFRVALFSRLVNALSEDTGHSSYPSHRSFTKMSSMNERETGML. Ser-334 bears the Phosphoserine mark. The segment at 336–362 is disordered; sequence DTGHSSYPSHRSFTKMSSMNERETGML. Thr-337 carries the phosphothreonine modification. The span at 339–354 shows a compositional bias: polar residues; that stretch reads HSSYPSHRSFTKMSSM. Phosphoserine occurs at positions 344, 347, and 353.

This sequence belongs to the chemokine-like receptor (CMKLR) family. Widely expressed in several tissues including adipose, muscle, liver and brain.

Its subcellular location is the cell membrane. Its function is as follows. Receptor for the chemoattractant adipokine chemerin/RARRES2 and for the omega-3 fatty acid derived molecule resolvin E1. Interaction with RARRES2 initiates activation of G proteins G(i)/G(o) and beta-arrestin pathways inducing cellular responses via second messenger pathways such as intracellular calcium mobilization, phosphorylation of MAP kinases MAPK1/MAPK3 (ERK1/2), TYRO3, MAPK14/P38MAPK and PI3K leading to multifunctional effects, like, reduction of immune responses, enhancing of adipogenesis and angionesis. Resolvin E1 down-regulates cytokine production in macrophages by reducing the activation of MAPK1/3 (ERK1/2) and NF-kappa-B. Positively regulates adipogenesis and adipocyte metabolism. The chain is Chemerin-like receptor 1 (CMLKR1) from Bos taurus (Bovine).